The primary structure comprises 1390 residues: Nuclear pore complex protein Nup155 (1390 aa).

The O-linked (GlcNAc) serine glycan is linked to Ser-525. Residues 598 to 632 are disordered; that stretch reads GSPMYSSSPVPTGSPYPNPSSLGTPSHGAQPPTMS. Residue Lys-739 forms a Glycyl lysine isopeptide (Lys-Gly) (interchain with G-Cter in SUMO2) linkage. The disordered stretch occupies residues 984–1011; sequence QSKAAPQSPSVPKKPGPPVLSSDPNMLS. Ser-1056 is modified (phosphoserine).

The protein belongs to the non-repetitive/WGA-negative nucleoporin family. In terms of assembly, interacts with GLE1. Able to form a heterotrimer with GLE1 and NUP42 in vitro. Forms a complex with NUP35, NUP93, NUP205 and lamin B. In terms of processing, phosphorylated. Phosphorylation and dephosphorylation may be important for the function of NUP155 and may play a role in the reversible disassembly of the nuclear pore complex during mitosis. Post-translationally, disulfide-linked to NUP62. The inner channel of the NPC has a different redox environment from the cytoplasm and allows the formation of interchain disulfide bonds between some nucleoporins, the significant increase of these linkages upon oxidative stress reduces the permeability of the NPC.

It is found in the nucleus. The protein localises to the nuclear pore complex. It localises to the nucleus membrane. Functionally, essential component of nuclear pore complex. Could be essessential for embryogenesis. Nucleoporins may be involved both in binding and translocating proteins during nucleocytoplasmic transport. In Rattus norvegicus (Rat), this protein is Nuclear pore complex protein Nup155 (Nup155).